We begin with the raw amino-acid sequence, 494 residues long: Protein nucleotidyltransferase YdiU (494 aa).

Gly-99, Gly-101, Arg-102, Lys-118, Asp-130, Gly-131, Arg-181, and Arg-188 together coordinate ATP. Asp-261 functions as the Proton acceptor in the catalytic mechanism. Mg(2+) contacts are provided by Asn-262 and Asp-271. Asp-271 is a binding site for ATP.

It belongs to the SELO family. Mg(2+) serves as cofactor. The cofactor is Mn(2+).

It catalyses the reaction L-seryl-[protein] + ATP = 3-O-(5'-adenylyl)-L-seryl-[protein] + diphosphate. It carries out the reaction L-threonyl-[protein] + ATP = 3-O-(5'-adenylyl)-L-threonyl-[protein] + diphosphate. The catalysed reaction is L-tyrosyl-[protein] + ATP = O-(5'-adenylyl)-L-tyrosyl-[protein] + diphosphate. The enzyme catalyses L-histidyl-[protein] + UTP = N(tele)-(5'-uridylyl)-L-histidyl-[protein] + diphosphate. It catalyses the reaction L-seryl-[protein] + UTP = O-(5'-uridylyl)-L-seryl-[protein] + diphosphate. It carries out the reaction L-tyrosyl-[protein] + UTP = O-(5'-uridylyl)-L-tyrosyl-[protein] + diphosphate. Nucleotidyltransferase involved in the post-translational modification of proteins. It can catalyze the addition of adenosine monophosphate (AMP) or uridine monophosphate (UMP) to a protein, resulting in modifications known as AMPylation and UMPylation. This Variovorax paradoxus (strain S110) protein is Protein nucleotidyltransferase YdiU.